Reading from the N-terminus, the 239-residue chain is Large ribosomal subunit protein uL2 (239 aa).

Disordered regions lie at residues 1–28 and 199–239; these read MGKRILPQRMGRGTPTFRSPSHRRVGPA and SHPH…RRKG. Residues 225 to 239 are compositionally biased toward basic residues; sequence KVGHIAARRTGRRKG.

This sequence belongs to the universal ribosomal protein uL2 family. In terms of assembly, part of the 50S ribosomal subunit. Forms a bridge to the 30S subunit in the 70S ribosome.

One of the primary rRNA binding proteins. Required for association of the 30S and 50S subunits to form the 70S ribosome, for tRNA binding and peptide bond formation. It has been suggested to have peptidyltransferase activity; this is somewhat controversial. Makes several contacts with the 16S rRNA in the 70S ribosome. The polypeptide is Large ribosomal subunit protein uL2 (Staphylothermus marinus (strain ATCC 43588 / DSM 3639 / JCM 9404 / F1)).